The chain runs to 415 residues: Serine hydroxymethyltransferase (415 aa).

(6S)-5,6,7,8-tetrahydrofolate-binding positions include Leu-121 and 125–127; that span reads GHL. Lys-229 carries the N6-(pyridoxal phosphate)lysine modification. 352-354 is a (6S)-5,6,7,8-tetrahydrofolate binding site; the sequence is SPF.

The protein belongs to the SHMT family. Homodimer. Pyridoxal 5'-phosphate is required as a cofactor.

It is found in the cytoplasm. It carries out the reaction (6R)-5,10-methylene-5,6,7,8-tetrahydrofolate + glycine + H2O = (6S)-5,6,7,8-tetrahydrofolate + L-serine. The protein operates within one-carbon metabolism; tetrahydrofolate interconversion. It participates in amino-acid biosynthesis; glycine biosynthesis; glycine from L-serine: step 1/1. Catalyzes the reversible interconversion of serine and glycine with tetrahydrofolate (THF) serving as the one-carbon carrier. This reaction serves as the major source of one-carbon groups required for the biosynthesis of purines, thymidylate, methionine, and other important biomolecules. Also exhibits THF-independent aldolase activity toward beta-hydroxyamino acids, producing glycine and aldehydes, via a retro-aldol mechanism. This chain is Serine hydroxymethyltransferase, found in Methylobacillus flagellatus (strain ATCC 51484 / DSM 6875 / VKM B-1610 / KT).